The primary structure comprises 565 residues: UV-stimulated scaffold protein A homolog (565 aa).

The tract at residues arginine 11–aspartate 156 is VHS-like. Residues valine 155–valine 215 are a coiled coil. The segment at aspartate 441–leucine 468 adopts a UVSSA-type zinc-finger fold. Zn(2+) is bound by residues cysteine 444, cysteine 454, cysteine 462, and histidine 465. Residues aspartate 480–glutamate 510 adopt a coiled-coil conformation. 2 disordered regions span residues glutamate 510–glutamine 530 and valine 542–leucine 565.

The protein belongs to the UVSSA family.

The protein localises to the chromosome. Factor involved in transcription-coupled nucleotide excision repair (TC-NER) in response to UV damage. TC-NER allows RNA polymerase II-blocking lesions to be rapidly removed from the transcribed strand of active genes. In Caenorhabditis briggsae, this protein is UV-stimulated scaffold protein A homolog.